A 49-amino-acid polypeptide reads, in one-letter code: Zinc-containing ferredoxin (49 aa).

The tract at residues 1–36 (GIDPNYRTSRQVVGEHQGHKVYGPVDPPKVLGIHGT) is N-terminal extension. The Zn(2+) site is built by H16 and H19. Residue K29 is modified to N6-methyllysine. A Zn(2+)-binding site is contributed by H34. Positions 37–49 (IVXVDFDLCIADG) are ferredoxin. C45 provides a ligand contact to [3Fe-4S] cluster.

[3Fe-4S] cluster serves as cofactor. [4Fe-4S] cluster is required as a cofactor. The cofactor is Zn(2+).

Ferredoxins are iron-sulfur proteins that transfer electrons in a wide variety of metabolic reactions. The polypeptide is Zinc-containing ferredoxin (zfx) (Acidianus infernus).